The following is a 723-amino-acid chain: Methionine--tRNA ligase (723 aa).

Residues 11–21 carry the 'HIGH' region motif; that stretch reads PYANGPIHAGH. The Zn(2+) site is built by Cys143, Cys146, Cys156, and Cys159. A 'KMSKS' region motif is present at residues 344-348; the sequence is KFSTS. Thr347 serves as a coordination point for ATP. A tRNA-binding domain is found at 623–723; the sequence is DFAKLDLRVG…KEVKLGAKVR (101 aa).

The protein belongs to the class-I aminoacyl-tRNA synthetase family. MetG type 1 subfamily. As to quaternary structure, homodimer. It depends on Zn(2+) as a cofactor.

It is found in the cytoplasm. The enzyme catalyses tRNA(Met) + L-methionine + ATP = L-methionyl-tRNA(Met) + AMP + diphosphate. Functionally, is required not only for elongation of protein synthesis but also for the initiation of all mRNA translation through initiator tRNA(fMet) aminoacylation. This chain is Methionine--tRNA ligase, found in Pyrococcus horikoshii (strain ATCC 700860 / DSM 12428 / JCM 9974 / NBRC 100139 / OT-3).